The chain runs to 390 residues: tRNA(Met) cytidine acetate ligase (390 aa).

Residues 7 to 20 (VVEYNPFHNGHKLH), glycine 101, asparagine 162, and arginine 187 contribute to the ATP site.

The protein belongs to the TmcAL family.

It localises to the cytoplasm. It catalyses the reaction cytidine(34) in elongator tRNA(Met) + acetate + ATP = N(4)-acetylcytidine(34) in elongator tRNA(Met) + AMP + diphosphate. Its function is as follows. Catalyzes the formation of N(4)-acetylcytidine (ac(4)C) at the wobble position of elongator tRNA(Met), using acetate and ATP as substrates. First activates an acetate ion to form acetyladenylate (Ac-AMP) and then transfers the acetyl group to tRNA to form ac(4)C34. This Listeria monocytogenes serotype 4a (strain HCC23) protein is tRNA(Met) cytidine acetate ligase.